The chain runs to 56 residues: Large ribosomal subunit protein bL32 (56 aa).

The segment at 1-28 (MAVQQNRKTRSKRGMRRSHDALTTAALS) is disordered. The span at 7 to 16 (RKTRSKRGMR) shows a compositional bias: basic residues.

It belongs to the bacterial ribosomal protein bL32 family.

This chain is Large ribosomal subunit protein bL32, found in Vibrio vulnificus (strain CMCP6).